A 162-amino-acid polypeptide reads, in one-letter code: Small ribosomal subunit protein uS7m (162 aa).

It belongs to the universal ribosomal protein uS7 family. In terms of assembly, part of the small ribosomal subunit.

It is found in the mitochondrion. Functionally, one of the primary rRNA binding proteins, it binds directly to 16S-like rRNA where it nucleates assembly of the head domain of the small subunit. The protein is Small ribosomal subunit protein uS7m (mrps7) of Dictyostelium citrinum (Slime mold).